We begin with the raw amino-acid sequence, 796 residues long: RalBP1-associated Eps domain-containing protein 1 (796 aa).

An EH 1 domain is found at 10–113 (EQKYYSDLFS…SKNEQESRHA (104 aa)). Residues 105–237 (KNEQESRHAA…ENWVSFADTP (133 aa)) form a disordered region. Residues 115-126 (SYSSDSENQGSY) are compositionally biased toward polar residues. A phosphoserine mark is found at S143, S145, S162, S166, and S170. Residues 145 to 156 (SHDTVQPRTSAD) are compositionally biased toward polar residues. The residue at position 173 (T173) is a Phosphothreonine. 2 positions are modified to phosphoserine: S272 and S273. One can recognise an EH 2 domain in the interval 285 to 374 (QRQYYVNQFK…ESLMPKLIDL (90 aa)). Y288 carries the phosphotyrosine modification. S307 carries the phosphoserine modification. One can recognise an EF-hand domain in the interval 318–353 (LPILELSHIWELSDFDKDGALTLDEFCAAFHLVVAR). Ca(2+) is bound by residues D331, D333, D335, and E342. The disordered stretch occupies residues 377–433 (SADVGDQPGEVGYSGSPAEAPPSKSPSMPSLNQTWPELNQSSEQWETFSERSSSSQT). Residues 407–433 (LNQTWPELNQSSEQWETFSERSSSSQT) are compositionally biased toward polar residues. Residues S475, S482, S489, and S540 each carry the phosphoserine modification. A compositionally biased stretch (polar residues) spans 506-543 (GNTVADGYSSSDSFTSDPEQIGSNVTRQRSHSGTSPDN). Disordered regions lie at residues 506–624 (GNTV…IPEQ) and 638–725 (ASNV…QKTG). T544 bears the Phosphothreonine mark. The span at 544–554 (TAPPPPPPRPQ) shows a compositional bias: pro residues. A Phosphoserine modification is found at S562. Residues 563 to 574 (LDMNRTFTVTTG) are compositionally biased toward polar residues. A compositionally biased stretch (low complexity) spans 575–584 (QQQAGVVAHP). Residues 585-596 (PAVPPRPQPSQA) are compositionally biased toward pro residues. The span at 612 to 623 (THTSTSPQQIPE) shows a compositional bias: polar residues. Residues 652-796 (HPEVLPAEKA…LEQLRPFSHL (145 aa)) are interaction with RALBP1. Basic and acidic residues-rich tracts occupy residues 671-681 (AKTDSKTEEKT) and 708-722 (KSED…EHTQ). S709 and S740 each carry phosphoserine. Residues 751–791 (SIRRNKETNTVLARLNSELQQQLKDVLEERISLEVQLEQLR) are a coiled coil.

As to quaternary structure, homodimer (Potential). Interacts with RAB11FIP2. Interacts with RALBP1, CRK and GRB2. Binding to RALBP1 does not affect its Ral-binding activity. Forms a complex with the SH3 domains of CRK and GRB2 which may link it to an EGF-responsive tyrosine kinase. Interacts with AMPH, ITSN1 (via SH3 domains) and SGIP1; may be involved in clathrin-mediated endocytosis. Post-translationally, EGF stimulates phosphorylation on Tyr-residues. Widely expressed with highest levels in heart and testis.

Its subcellular location is the membrane. The protein resides in the clathrin-coated pit. In terms of biological role, may coordinate the cellular actions of activated EGF receptors and Ral-GTPases. The protein is RalBP1-associated Eps domain-containing protein 1 (REPS1) of Homo sapiens (Human).